The primary structure comprises 316 residues: Ribosomal RNA small subunit methyltransferase H (316 aa).

Residues 35–37, Asp55, Phe84, Asp105, and Gln112 contribute to the S-adenosyl-L-methionine site; that span reads AGH.

The protein belongs to the methyltransferase superfamily. RsmH family.

Its subcellular location is the cytoplasm. It catalyses the reaction cytidine(1402) in 16S rRNA + S-adenosyl-L-methionine = N(4)-methylcytidine(1402) in 16S rRNA + S-adenosyl-L-homocysteine + H(+). In terms of biological role, specifically methylates the N4 position of cytidine in position 1402 (C1402) of 16S rRNA. The protein is Ribosomal RNA small subunit methyltransferase H of Streptococcus gordonii (strain Challis / ATCC 35105 / BCRC 15272 / CH1 / DL1 / V288).